The sequence spans 293 residues: D-alanine--D-alanine ligase (293 aa).

Residues 98 to 291 form the ATP-grasp domain; sequence KIIWEQHSLT…FNKLVTSIIN (194 aa). 124-177 contributes to the ATP binding site; that stretch reads NFPLPWAVKPTLEGSSIGISKVDNQMQLNDALMLAWQYAPYALIEQWIKGDEYT. Positions 245, 258, and 260 each coordinate Mg(2+).

Belongs to the D-alanine--D-alanine ligase family. Mg(2+) is required as a cofactor. It depends on Mn(2+) as a cofactor.

Its subcellular location is the cytoplasm. It carries out the reaction 2 D-alanine + ATP = D-alanyl-D-alanine + ADP + phosphate + H(+). Its pathway is cell wall biogenesis; peptidoglycan biosynthesis. Functionally, cell wall formation. The chain is D-alanine--D-alanine ligase from Vesicomyosocius okutanii subsp. Calyptogena okutanii (strain HA).